The sequence spans 187 residues: dCTP deaminase, dUMP-forming (187 aa).

Residues 99–104 (KSSIAR), aspartate 117, 125–127 (TLE), glutamine 146, tyrosine 159, lysine 166, and glutamine 170 contribute to the dCTP site. Glutamate 127 serves as the catalytic Proton donor/acceptor.

The protein belongs to the dCTP deaminase family. In terms of assembly, homotrimer.

It carries out the reaction dCTP + 2 H2O = dUMP + NH4(+) + diphosphate. The protein operates within pyrimidine metabolism; dUMP biosynthesis; dUMP from dCTP: step 1/1. Functionally, bifunctional enzyme that catalyzes both the deamination of dCTP to dUTP and the hydrolysis of dUTP to dUMP without releasing the toxic dUTP intermediate. This is dCTP deaminase, dUMP-forming from Methanoculleus marisnigri (strain ATCC 35101 / DSM 1498 / JR1).